The sequence spans 404 residues: Cytochrome b561 and DOMON domain-containing protein At5g35735 (404 aa).

A signal peptide spans 1-25 (MDRTQSPKTALFAVLATLLVLTVNG). In terms of domain architecture, DOMON spans 49–164 (LGSFLHWTYN…ITANQLWQVG (116 aa)). Positions 170-369 (VPASHQTSGD…LEPLTWFIVL (200 aa)) constitute a Cytochrome b561 domain. Positions 172–207 (ASHQTSGDNMRSSGRIDFRTGQASAGGGGSGDRLRK) are disordered. Residues 173–183 (SHQTSGDNMRS) are compositionally biased toward polar residues. The next 2 helical transmembrane spans lie at 210–230 (THGV…AMMA) and 241–261 (WFYL…AGWA). The heme b site is built by H211, H245, and H278. Residues 280–300 (NLGIALFTFATLQVFALLVRP) traverse the membrane as a helical segment. H314 lines the heme b pocket. 2 helical membrane-spanning segments follow: residues 316–336 (TVGY…FDIL) and 349–369 (ILIF…FIVL). The segment at 376–404 (GNTVAAPTSSKYSNGVNGTTTTGPHHQDA) is disordered. Polar residues predominate over residues 380–404 (AAPTSSKYSNGVNGTTTTGPHHQDA).

It depends on heme b as a cofactor.

The protein resides in the membrane. In terms of biological role, may act as a catecholamine-responsive trans-membrane electron transporter. The polypeptide is Cytochrome b561 and DOMON domain-containing protein At5g35735 (Arabidopsis thaliana (Mouse-ear cress)).